Here is a 178-residue protein sequence, read N- to C-terminus: Large ribosomal subunit protein bL25 (178 aa).

Belongs to the bacterial ribosomal protein bL25 family. CTC subfamily. In terms of assembly, part of the 50S ribosomal subunit; part of the 5S rRNA/L5/L18/L25 subcomplex. Contacts the 5S rRNA. Binds to the 5S rRNA independently of L5 and L18.

In terms of biological role, this is one of the proteins that binds to the 5S RNA in the ribosome where it forms part of the central protuberance. This Nitratiruptor sp. (strain SB155-2) protein is Large ribosomal subunit protein bL25.